A 263-amino-acid polypeptide reads, in one-letter code: 5'-nucleotidase SurE (263 aa).

A divalent metal cation-binding residues include D8, D9, S40, and N93.

Belongs to the SurE nucleotidase family. A divalent metal cation is required as a cofactor.

The protein resides in the cytoplasm. The enzyme catalyses a ribonucleoside 5'-phosphate + H2O = a ribonucleoside + phosphate. Nucleotidase that shows phosphatase activity on nucleoside 5'-monophosphates. This chain is 5'-nucleotidase SurE, found in Beijerinckia indica subsp. indica (strain ATCC 9039 / DSM 1715 / NCIMB 8712).